A 236-amino-acid polypeptide reads, in one-letter code: CHD1 helical C-terminal domain containing protein 1 (236 aa).

The segment at 1–29 (MEASDWQGGEGDKPLEKVGSVPCLERSSS) is disordered. The interval 44–145 (LSQDTFKICK…TNQTAKFLAA (102 aa)) is CHD1 helical C-terminal domain (CHCT). Residues 197–236 (LEEPRSSHCSRGDSLRKLPQKPKLKKKRIKERLESPKSCS) are disordered. Basic and acidic residues predominate over residues 198–212 (EEPRSSHCSRGDSLR). Positions 214–226 (LPQKPKLKKKRIK) are enriched in basic residues. Positions 227–236 (ERLESPKSCS) are enriched in basic and acidic residues.

As to expression, exclusively expressed in testes.

It is found in the cytoplasm. Its subcellular location is the nucleus. May play a role in regulation of apoptosis. In Mus musculus (Mouse), this protein is CHD1 helical C-terminal domain containing protein 1 (Chct1).